A 204-amino-acid polypeptide reads, in one-letter code: DNA-directed RNA polymerase subunit gamma (204 aa).

Zn(2+) is bound by residues C34, C36, C49, and C52.

This sequence belongs to the RNA polymerase beta' chain family. RpoC1 subfamily. As to quaternary structure, in cyanobacteria the RNAP catalytic core is composed of 2 alpha, 1 beta, 1 beta', 1 gamma and 1 omega subunit. When a sigma factor is associated with the core the holoenzyme is formed, which can initiate transcription. Zn(2+) serves as cofactor.

The catalysed reaction is RNA(n) + a ribonucleoside 5'-triphosphate = RNA(n+1) + diphosphate. Functionally, DNA-dependent RNA polymerase catalyzes the transcription of DNA into RNA using the four ribonucleoside triphosphates as substrates. This Prochlorococcus marinus (strain DV1) protein is DNA-directed RNA polymerase subunit gamma (rpoC1).